Reading from the N-terminus, the 264-residue chain is Thymidylate synthase (264 aa).

Residue R21 participates in dUMP binding. Position 51 (H51) interacts with (6R)-5,10-methylene-5,6,7,8-tetrahydrofolate. Residue 126–127 (RR) coordinates dUMP. C146 serves as the catalytic Nucleophile. DUMP-binding positions include 166–169 (RSAD), N177, and 207–209 (HLY). D169 contributes to the (6R)-5,10-methylene-5,6,7,8-tetrahydrofolate binding site. A263 is a (6R)-5,10-methylene-5,6,7,8-tetrahydrofolate binding site.

This sequence belongs to the thymidylate synthase family. Bacterial-type ThyA subfamily. Homodimer.

It localises to the cytoplasm. The catalysed reaction is dUMP + (6R)-5,10-methylene-5,6,7,8-tetrahydrofolate = 7,8-dihydrofolate + dTMP. It functions in the pathway pyrimidine metabolism; dTTP biosynthesis. Catalyzes the reductive methylation of 2'-deoxyuridine-5'-monophosphate (dUMP) to 2'-deoxythymidine-5'-monophosphate (dTMP) while utilizing 5,10-methylenetetrahydrofolate (mTHF) as the methyl donor and reductant in the reaction, yielding dihydrofolate (DHF) as a by-product. This enzymatic reaction provides an intracellular de novo source of dTMP, an essential precursor for DNA biosynthesis. This is Thymidylate synthase from Allorhizobium ampelinum (strain ATCC BAA-846 / DSM 112012 / S4) (Agrobacterium vitis (strain S4)).